Reading from the N-terminus, the 319-residue chain is Probable NAD(P)H-dependent D-xylose reductase xyl1 (319 aa).

Residue N26 is glycosylated (N-linked (GlcNAc...) asparagine). Y50 (proton donor) is an active-site residue. A substrate-binding site is contributed by H112. N141 and N167 each carry an N-linked (GlcNAc...) asparagine glycan. NAD(+) is bound by residues S166 to N167, S215 to E224, and K271 to N281.

The protein belongs to the aldo/keto reductase family.

It carries out the reaction xylitol + NAD(+) = D-xylose + NADH + H(+). The catalysed reaction is xylitol + NADP(+) = D-xylose + NADPH + H(+). Its pathway is carbohydrate metabolism; D-xylose degradation. In terms of biological role, catalyzes the initial reaction in the xylose utilization pathway by reducing D-xylose into xylitol. Xylose is a major component of hemicelluloses such as xylan. Most fungi utilize D-xylose via three enzymatic reactions, xylose reductase (XR), xylitol dehydrogenase (XDH), and xylulokinase, to form xylulose 5-phosphate, which enters pentose phosphate pathway. This is Probable NAD(P)H-dependent D-xylose reductase xyl1 (xyl1) from Aspergillus niger (strain ATCC MYA-4892 / CBS 513.88 / FGSC A1513).